A 1139-amino-acid polypeptide reads, in one-letter code: MFTVNKKPVVYSTRDGAEVLKGKISLVLKTLPSLFVLPPTPIQDGSDYTITPMIFVENGQLRLGQPQVPFSDQLELIKDEPNQLEVDFLKKLYIISKIQSTINDFEMQPDMGKNFALFELETEFGSVDETVWYNRLFDVQKFQQMVEENAAEVTLESRTTDLWAGVTPSFTPTAFVTNKINLETEIPNLRQESELMVFDTIRVNATVVACFYQDLIKYNQDFNPWIKDYLAQDKLLTKKLRASDIIRLMIAGTTPRKKYKMINVYVYPETISFTVEMLLNFDSTNGADNLKKLIKTIIVDMGKEDAYDQRVEKEYYYGSYSAPINVPIFVVKDLLTNDSNVYNIAYINESALINTRRSNLNLFLKNSSKDLKQHVGVSLFERPDTVGTFVRLKKIRGGAELQTTIDTSMGVVNKLLQYSVGKVAQVFNYYQTYINIVANLDPTVDLNREKENLLKVQAPEIFLPNYTRLCNKPPVIIEGEPQPEDGTILKFPIYGEAEPRYYKCPYPNYPHPGLRRNTTLGNRDTFPYVPCCYQRPQSMNKNYNTYYNQAVYEQRINSGEIGKTLKILAPKRIGELPPRINKLLSYSTKLKFYRYGFKTSLYSVLDVLNTATGSAATIEAVRRELSTRVELCKGEISSLQTGEIAEKIMDPATYVNPRLFKRALEDYYNLSIILFSKDQDDFSVYANKFLKFICPLRKRVVFMIEHEQAQHVELVLDEETLGHVNKQGSRPILTWDRNDFPVKKLFALYKDRFTHTLYDIGAKRFVSIHNLLMESSLTGTALEGLKRNTFHVYPWETISPNGKIVKSVQPLNQYTDSYGQTRLVEFRWKELRFVSEFQPLPCLAIAQVPEADPNHYTKPLEYFIQVNDKLTEEERATIREAFAWCNLYRTPLVSDADYRSPYYEFRRVKKLAQYILWAACHAYAQTYQTRPLSVMEWIDQDTRVDPNFSYSRVTISPLFNLDQFTVDSKFIFNSVQLQERVMFNLRLISTVNLKVYAANVYHAFYQDVTNFTVPYPAQLALSKTEYYQRTREPLIVQVLSDENVPYLRAGTLYVLENLFGIYSGNLCLFELSLEKLFEKSEQLFQQAVPPNTRVNIVLFNQGVPEYYVLGQNAPELDVIILNINNLWFYGLLRPKLTDM.

This sequence belongs to the IIV-6 295L family.

This is an uncharacterized protein from Aedes vexans (Inland floodwater mosquito).